The chain runs to 199 residues: V-type ATP synthase subunit E (199 aa).

This sequence belongs to the V-ATPase E subunit family.

Its function is as follows. Produces ATP from ADP in the presence of a proton gradient across the membrane. The protein is V-type ATP synthase subunit E of Borreliella afzelii (strain PKo) (Borrelia afzelii).